A 157-amino-acid polypeptide reads, in one-letter code: Peptide methionine sulfoxide reductase MsrA (157 aa).

Cysteine 10 is a catalytic residue.

It belongs to the MsrA Met sulfoxide reductase family.

The enzyme catalyses L-methionyl-[protein] + [thioredoxin]-disulfide + H2O = L-methionyl-(S)-S-oxide-[protein] + [thioredoxin]-dithiol. The catalysed reaction is [thioredoxin]-disulfide + L-methionine + H2O = L-methionine (S)-S-oxide + [thioredoxin]-dithiol. Functionally, has an important function as a repair enzyme for proteins that have been inactivated by oxidation. Catalyzes the reversible oxidation-reduction of methionine sulfoxide in proteins to methionine. The protein is Peptide methionine sulfoxide reductase MsrA of Clostridium botulinum (strain Loch Maree / Type A3).